A 94-amino-acid chain; its full sequence is Co-chaperonin GroES (94 aa).

This sequence belongs to the GroES chaperonin family. As to quaternary structure, heptamer of 7 subunits arranged in a ring. Interacts with the chaperonin GroEL.

The protein resides in the cytoplasm. Its function is as follows. Together with the chaperonin GroEL, plays an essential role in assisting protein folding. The GroEL-GroES system forms a nano-cage that allows encapsulation of the non-native substrate proteins and provides a physical environment optimized to promote and accelerate protein folding. GroES binds to the apical surface of the GroEL ring, thereby capping the opening of the GroEL channel. This is Co-chaperonin GroES from Brevibacillus brevis (strain 47 / JCM 6285 / NBRC 100599).